The sequence spans 376 residues: MASAPWPERVPRLLAPRLPSYPPPPPTVGLPSMEQEEAYLELYLDQCAAQDGLAPPRSPLFSPVVPYDMYILNASNPDTAFNSNPEVKETSGDFSSVDLSFLPDEVTQENKDQPVISKHETEENSESQSPQSRLPSPSEQDVGLGLNSSSLSNSHSQLHPGDTDSVQPSPEKPNSDSLSLASITPMTPMTPISECCGIVPQLQNIVSTVNLACKLDLKKIALHAKNAEYNPKRFAAVIMRIREPRTTALIFSSGKMVCTGAKSEEQSRLAARKYARVVQKLGFPAKFLDFKIQNMVGSCDVKFPIRLEGLVLTHQQFSSYEPELFPGLIYRMIKPRIVLLIFVSGKVVLTGAKVRAEIYEAFENIYPILKGFRKTT.

Positions 103-184 (PDEVTQENKD…SDSLSLASIT (82 aa)) are disordered. A compositionally biased stretch (basic and acidic residues) spans 108–122 (QENKDQPVISKHETE). A compositionally biased stretch (low complexity) spans 126 to 159 (ESQSPQSRLPSPSEQDVGLGLNSSSLSNSHSQLH). Residues 175–184 (SDSLSLASIT) show a composition bias toward polar residues.

Belongs to the TBP family. Interacts with TAF3.

It is found in the cytoplasm. The protein resides in the nucleus. Transcription factor required in complex with TAF3 for the differentiation of myoblasts into myocytes. The complex replaces TFIID at specific promoters at an early stage in the differentiation process. The sequence is that of TATA box-binding protein-like 2 from Pan troglodytes (Chimpanzee).